The primary structure comprises 107 residues: Iron-sulfur cluster assembly protein CyaY (107 aa).

The protein belongs to the frataxin family.

In terms of biological role, involved in iron-sulfur (Fe-S) cluster assembly. May act as a regulator of Fe-S biogenesis. The protein is Iron-sulfur cluster assembly protein CyaY of Neisseria gonorrhoeae (strain ATCC 700825 / FA 1090).